A 531-amino-acid polypeptide reads, in one-letter code: Probable bifunctional methylthioribulose-1-phosphate dehydratase/enolase-phosphatase E1 2 (531 aa).

The methylthioribulose-1-phosphate dehydratase stretch occupies residues Met-1 to Asp-248. Cys-120 provides a ligand contact to substrate. His-138 and His-140 together coordinate Zn(2+). Glu-163 serves as the catalytic Proton donor/acceptor; for methylthioribulose-1-phosphate dehydratase activity. His-213 serves as a coordination point for Zn(2+). The interval Ile-292 to Ile-531 is enolase-phosphatase E1. Residues Asp-295 and Glu-297 each contribute to the Mg(2+) site. Substrate is bound by residues Ser-430 to Ser-431 and Lys-464. Asp-490 contributes to the Mg(2+) binding site.

This sequence in the N-terminal section; belongs to the aldolase class II family. MtnB subfamily. In the C-terminal section; belongs to the HAD-like hydrolase superfamily. MasA/MtnC family. It depends on Zn(2+) as a cofactor. Mg(2+) is required as a cofactor.

It carries out the reaction 5-(methylsulfanyl)-D-ribulose 1-phosphate = 5-methylsulfanyl-2,3-dioxopentyl phosphate + H2O. The enzyme catalyses 5-methylsulfanyl-2,3-dioxopentyl phosphate + H2O = 1,2-dihydroxy-5-(methylsulfanyl)pent-1-en-3-one + phosphate. The protein operates within amino-acid biosynthesis; L-methionine biosynthesis via salvage pathway; L-methionine from S-methyl-5-thio-alpha-D-ribose 1-phosphate: step 2/6. Its pathway is amino-acid biosynthesis; L-methionine biosynthesis via salvage pathway; L-methionine from S-methyl-5-thio-alpha-D-ribose 1-phosphate: step 3/6. It functions in the pathway amino-acid biosynthesis; L-methionine biosynthesis via salvage pathway; L-methionine from S-methyl-5-thio-alpha-D-ribose 1-phosphate: step 4/6. This is Probable bifunctional methylthioribulose-1-phosphate dehydratase/enolase-phosphatase E1 2 from Vitis vinifera (Grape).